Here is a 340-residue protein sequence, read N- to C-terminus: N-acetyl-gamma-glutamyl-phosphate reductase (340 aa).

The active site involves Cys146.

This sequence belongs to the NAGSA dehydrogenase family. Type 1 subfamily.

It is found in the cytoplasm. It carries out the reaction N-acetyl-L-glutamate 5-semialdehyde + phosphate + NADP(+) = N-acetyl-L-glutamyl 5-phosphate + NADPH + H(+). Its pathway is amino-acid biosynthesis; L-arginine biosynthesis; N(2)-acetyl-L-ornithine from L-glutamate: step 3/4. Catalyzes the NADPH-dependent reduction of N-acetyl-5-glutamyl phosphate to yield N-acetyl-L-glutamate 5-semialdehyde. The chain is N-acetyl-gamma-glutamyl-phosphate reductase from Streptococcus sanguinis (strain SK36).